A 718-amino-acid polypeptide reads, in one-letter code: DNA topoisomerase 1 (718 aa).

The region spanning 9-151 is the Toprim domain; the sequence is HEVIICEKPK…KFSTLTREEI (143 aa). Mg(2+)-binding residues include Glu15 and Asp113. The Topo IA-type catalytic domain occupies 162 to 571; that stretch reads DYGQVDSGAA…EAITEVRSIL (410 aa). An interaction with DNA region spans residues 202 to 207; the sequence is SAGRVQ. Tyr320 functions as the O-(5'-phospho-DNA)-tyrosine intermediate in the catalytic mechanism. Residues 361–371 show a composition bias toward basic and acidic residues; sequence HEGKKEDDAHP. The tract at residues 361–380 is disordered; sequence HEGKKEDDAHPAIHPTGLLP. C4-type zinc fingers lie at residues 598–626 and 680–706; these read CPACGGKLVIKYSPRNRSTFVGCSSYPDC and CPECGSDLIKRSGRYGEFVGCKGFPKC.

The protein belongs to the type IA topoisomerase family. In terms of assembly, monomer. It depends on Mg(2+) as a cofactor.

The enzyme catalyses ATP-independent breakage of single-stranded DNA, followed by passage and rejoining.. In terms of biological role, releases the supercoiling and torsional tension of DNA, which is introduced during the DNA replication and transcription, by transiently cleaving and rejoining one strand of the DNA duplex. Introduces a single-strand break via transesterification at a target site in duplex DNA. The scissile phosphodiester is attacked by the catalytic tyrosine of the enzyme, resulting in the formation of a DNA-(5'-phosphotyrosyl)-enzyme intermediate and the expulsion of a 3'-OH DNA strand. The free DNA strand then undergoes passage around the unbroken strand, thus removing DNA supercoils. Finally, in the religation step, the DNA 3'-OH attacks the covalent intermediate to expel the active-site tyrosine and restore the DNA phosphodiester backbone. In Methanothermobacter thermautotrophicus (strain ATCC 29096 / DSM 1053 / JCM 10044 / NBRC 100330 / Delta H) (Methanobacterium thermoautotrophicum), this protein is DNA topoisomerase 1.